Reading from the N-terminus, the 440-residue chain is Chromosome partition protein MukF (440 aa).

The segment at leucine 208–isoleucine 236 is leucine-zipper.

It belongs to the MukF family. As to quaternary structure, interacts, and probably forms a ternary complex, with MukE and MukB via its C-terminal region. The complex formation is stimulated by calcium or magnesium. It is required for an interaction between MukE and MukB.

It localises to the cytoplasm. It is found in the nucleoid. Its function is as follows. Involved in chromosome condensation, segregation and cell cycle progression. May participate in facilitating chromosome segregation by condensation DNA from both sides of a centrally located replisome during cell division. Not required for mini-F plasmid partitioning. Probably acts via its interaction with MukB and MukE. Overexpression results in anucleate cells. It has a calcium binding activity. The protein is Chromosome partition protein MukF of Escherichia coli O17:K52:H18 (strain UMN026 / ExPEC).